The following is a 588-amino-acid chain: Protein decapentaplegic (588 aa).

The first 23 residues, 1 to 23 (MRAWLLLLAVLATFQTIVRVAST), serve as a signal peptide directing secretion. Positions 24 to 456 (EDISQRFIAA…DGRHKARSIR (433 aa)) are excised as a propeptide. Positions 74 to 169 (FSEPASFSDS…STESHQSSSI (96 aa)) are disordered. Residues 96–119 (SKSDANRQFNEVHKPRTDQLENSK) are compositionally biased toward basic and acidic residues. The N-linked (GlcNAc...) asparagine glycan is linked to asparagine 120. The segment covering 140 to 153 (RSHHKKSHHHRSHQ) has biased composition (basic residues). A compositionally biased stretch (low complexity) spans 156–169 (QASASTESHQSSSI). 2 N-linked (GlcNAc...) asparagine glycosylation sites follow: asparagine 342 and asparagine 377. The disordered stretch occupies residues 454-484 (SIRDVSGGEGGGKGGRNKRQPRRPTRRKNHD). Basic residues predominate over residues 468–481 (GRNKRQPRRPTRRK). 3 disulfides stabilise this stretch: cysteine 487–cysteine 553, cysteine 516–cysteine 585, and cysteine 520–cysteine 587. Asparagine 529 carries N-linked (GlcNAc...) asparagine glycosylation.

It belongs to the TGF-beta family. As to quaternary structure, heterodimers of scw/dpp are the active subunit, dpp/dpp homodimers elicit a basal response and scw/scw homodimers alone are ineffective in specifying a dorsal pattern. Component of a complex composed of dpp, sog and tsg. Interacts with nord and gbb; the interaction interferes with dpp secretion. In terms of tissue distribution, expressed in the dorsal region of the embryo, and becomes enriched in a dorsal midline stripe just prior to gastrulation. Expressed in midgut mesoderm and in two overlapping regions of the embryonic large intestine. Expressed in a long-range concentration gradient in the wing imaginal disk.

It is found in the secreted. Required during oogenesis for eggshell patterning and dorsal/ventral patterning of the embryo. Acts as a morphogen during embryogenesis to pattern the dorsal/ventral axis, specifying dorsal ectoderm and amnioserosa cell fate within the dorsal half of the embryo; this activity is antagonized by binding to sog and tsg. Induces the formation of visceral mesoderm and the heart in early embryos. Required later in embryogenesis for dorsal closure and patterning of the hindgut. Also functions postembryonically as a long-range morphogen during imaginal disk development; is responsible for the progression of the morphogenetic furrow during eye development. Patterns the wing imaginal disk along its anterior/posterior axis and has a role in positioning pro-veins. Also required to subdivide the wing disk along the proximal/distal axis into body wall (notum) and wing. Ensures the correct architecture of wing epithelial cells. Has multiple roles in the developing tracheal system, controlling directed tracheal cell migration during embryogenesis and later specifying the fate of fusion cells in the tracheal branches. Required for viability of larvae. Essential for the maintenance and division of germline stem cells in the ovary. Signals via the type I receptor tkv, the type II receptor punt, and in some tissues via the type I receptor sax, in a signaling cascade that leads to activation and repression of target genes. In Drosophila melanogaster (Fruit fly), this protein is Protein decapentaplegic (dpp).